We begin with the raw amino-acid sequence, 308 residues long: Very-long-chain enoyl-CoA reductase (308 aa).

Topologically, residues 1-86 (MKHYEVEIRD…YFRDLGAQIS (86 aa)) are cytoplasmic. Residue Lys-22 is modified to N6-acetyllysine. At Ser-58 the chain carries Phosphoserine. The residue at position 60 (Lys-60) is an N6-acetyllysine. Residues 87-106 (WVTVFLTEYAGPLFIYLLFY) traverse the membrane as a helical segment. Residues 107-124 (FRVPFIYGRKYDFTSSRH) are Lumenal-facing. The chain crosses the membrane as a helical span at residues 125–147 (TVVHLACMCHSFHYIKRLLETLF). The Cytoplasmic segment spans residues 148–158 (VHRFSHGTMPL). The helical transmembrane segment at 159–180 (RNIFKNCTYYWGFAAWMAYYIN) threads the bilayer. Residues 181 to 189 (HPLYTPPTY) lie on the Lumenal side of the membrane. Residues 190 to 216 (GVQQVKLALAVFVICQLGNFSIHMALR) form a helical membrane-spanning segment. Topologically, residues 217 to 245 (DLRPAGSKTRKIPYPTKNPFTWLFLLVSC) are cytoplasmic. A helical membrane pass occupies residues 246–262 (PNYTYEVGSWIGFAILT). The Lumenal portion of the chain corresponds to 263 to 264 (QC). The helical transmembrane segment at 265-292 (VPVALFSLVGFTQMTIWAKGKHRSYLKE) threads the bilayer. Residues 293–308 (FRDYPPLRMPIIPFLL) are Cytoplasmic-facing.

This sequence belongs to the steroid 5-alpha reductase family. In terms of assembly, interacts with ELOVL1 and LASS2. Post-translationally, glycosylated.

The protein localises to the endoplasmic reticulum membrane. The catalysed reaction is a very-long-chain 2,3-saturated fatty acyl-CoA + NADP(+) = a very-long-chain (2E)-enoyl-CoA + NADPH + H(+). It carries out the reaction octadecanoyl-CoA + NADP(+) = (2E)-octadecenoyl-CoA + NADPH + H(+). The enzyme catalyses (2E,7Z,10Z,13Z,16Z)-docosapentaenoyl-CoA + NADPH + H(+) = (7Z,10Z,13Z,16Z)-docosatetraenoyl-CoA + NADP(+). It catalyses the reaction (2E,7Z,10Z,13Z,16Z,19Z)-docosahexaenoyl-CoA + NADPH + H(+) = (7Z,10Z,13Z,16Z,19Z)-docosapentaenoyl-CoA + NADP(+). The catalysed reaction is (2E,8Z,11Z,14Z)-eicosatetraenoyl-CoA + NADPH + H(+) = (8Z,11Z,14Z)-eicosatrienoyl-CoA + NADP(+). It carries out the reaction (2E)-hexadecenoyl-CoA + NADPH + H(+) = hexadecanoyl-CoA + NADP(+). The protein operates within lipid metabolism; fatty acid biosynthesis. It functions in the pathway lipid metabolism; sphingolipid metabolism. Functionally, involved in both the production of very long-chain fatty acids for sphingolipid synthesis and the degradation of the sphingosine moiety in sphingolipids through the sphingosine 1-phosphate metabolic pathway. Catalyzes the last of the four reactions of the long-chain fatty acids elongation cycle. This endoplasmic reticulum-bound enzymatic process, allows the addition of 2 carbons to the chain of long- and very long-chain fatty acids/VLCFAs per cycle. This enzyme reduces the trans-2,3-enoyl-CoA fatty acid intermediate to an acyl-CoA that can be further elongated by entering a new cycle of elongation. Thereby, it participates in the production of VLCFAs of different chain lengths that are involved in multiple biological processes as precursors of membrane lipids and lipid mediators. Catalyzes the saturation step of the sphingosine 1-phosphate metabolic pathway, the conversion of trans-2-hexadecenoyl-CoA to palmitoyl-CoA. This chain is Very-long-chain enoyl-CoA reductase (Tecr), found in Mus musculus (Mouse).